The primary structure comprises 500 residues: Serine/threonine protein phosphatase 2A 57 kDa regulatory subunit B' kappa isoform (500 aa).

The interval 1-53 is disordered; sequence MFKQFLSKLPRKSSKSDSGELNRSSSGPVSSPVQRSGTSGGGSGPVRSNSGKR. Residues 21–37 are compositionally biased toward polar residues; that stretch reads LNRSSSGPVSSPVQRSG.

It belongs to the phosphatase 2A regulatory subunit B56 family. As to quaternary structure, PP2A consists of a common heteromeric enzyme, composed of a catalytic subunit (subunits C), a constant regulatory subunit (subunit A), and a variety of regulatory subunits such as subunits B (the R2/B/PR55/B55, R3/B''/PR72/PR130/PR59 and R5/B'/B56 families).

It localises to the cytoplasm. The B regulatory subunit may modulate substrate selectivity and catalytic activity, and may also direct the localization of the catalytic enzyme to a particular subcellular compartment. This is Serine/threonine protein phosphatase 2A 57 kDa regulatory subunit B' kappa isoform (B'KAPPA) from Arabidopsis thaliana (Mouse-ear cress).